A 209-amino-acid chain; its full sequence is Urease accessory protein UreG (209 aa).

Position 14–21 (14–21 (GPVGSGKT)) interacts with GTP.

It belongs to the SIMIBI class G3E GTPase family. UreG subfamily. Homodimer. UreD, UreF and UreG form a complex that acts as a GTP-hydrolysis-dependent molecular chaperone, activating the urease apoprotein by helping to assemble the nickel containing metallocenter of UreC. The UreE protein probably delivers the nickel.

It is found in the cytoplasm. In terms of biological role, facilitates the functional incorporation of the urease nickel metallocenter. This process requires GTP hydrolysis, probably effectuated by UreG. The polypeptide is Urease accessory protein UreG (Rhodopseudomonas palustris (strain ATCC BAA-98 / CGA009)).